A 555-amino-acid polypeptide reads, in one-letter code: Embryonic protein DC-8 (555 aa).

The span at 83 to 115 (RENTDYAYDKGREGGDVAAQKAEEAKEKAKMAK) shows a compositional bias: basic and acidic residues. Disordered stretches follow at residues 83 to 118 (RENT…KDTT) and 132 to 151 (KAEE…KEKA). 17 consecutive repeat copies span residues 97–114 (GDVA…AKMA), 115–125 (KDTTMGKAGEY), 126–140 (KDYT…KEKA), 141–154 (AQKA…AGEY), 155–176 (KNYT…AGEY), 177–191 (KDYA…KDTT), 192–205 (AQKA…TGEY), 206–216 (KDYAAQKAAEA), 217–237 (KVLA…DGEY), 238–259 (KDYA…TGEY), 260–281 (KDYA…AKEY), 282–303 (KEYA…TGEY), 304–325 (KDYS…TKEY), 326–343 (KDYT…TMEK), 344–358 (AKEA…TGEY), 359–376 (KDYA…TVEK), and 377–391 (AKEG…MTEL). The tract at residues 97–391 (GDVAAQKAEE…DTTVGKMTEL (295 aa)) is 17 X approximate tandem repeats. Residues 184–204 (AAEAKDTTAQKAAEAKEKTGE) form a disordered region. The span at 444–465 (LQEEGVKDEAKQRAEADRETAG) shows a compositional bias: basic and acidic residues. The segment at 444–472 (LQEEGVKDEAKQRAEADRETAGDRGSAAK) is disordered.

It belongs to the LEA type 4 family.

Its subcellular location is the cytoplasm. It is found in the secreted. The protein localises to the cell wall. May play a role in late embryogeny. This chain is Embryonic protein DC-8, found in Daucus carota (Wild carrot).